Reading from the N-terminus, the 74-residue chain is Large ribosomal subunit protein bL27c (74 aa).

The protein belongs to the bacterial ribosomal protein bL27 family.

It is found in the plastid. The protein resides in the chloroplast. This chain is Large ribosomal subunit protein bL27c (rpl27), found in Pleurochrysis haptonemofera (Unicellular marine alga).